A 231-amino-acid polypeptide reads, in one-letter code: MKRAVVVFSGGQDSTTCLIQALHQYDEVHCVTFDYGQRHRAEIDVASALAASLGARAHKVLDVTLLNELAVSSLTRDSIPVPDYDPDAEGLPSTFVPGRNILFLTLASIYAYQVQAEAVITGVCETDFSGYPDCRDEFVKALNHAVALGMARDVRFETPLMWLNKAETWALADYWGKLDVIRHQTLTCYNGIQGDGCGECAACHLRANGLSQYEADKPAIMAAMKQKTGLK.

8–18 lines the ATP pocket; sequence FSGGQDSTTCL. The Zn(2+) site is built by Cys-188, Cys-197, Cys-200, and Cys-203.

It belongs to the QueC family. Requires Zn(2+) as cofactor.

The enzyme catalyses 7-carboxy-7-deazaguanine + NH4(+) + ATP = 7-cyano-7-deazaguanine + ADP + phosphate + H2O + H(+). It participates in purine metabolism; 7-cyano-7-deazaguanine biosynthesis. Functionally, catalyzes the ATP-dependent conversion of 7-carboxy-7-deazaguanine (CDG) to 7-cyano-7-deazaguanine (preQ(0)). The protein is 7-cyano-7-deazaguanine synthase of Cronobacter sakazakii (strain ATCC BAA-894) (Enterobacter sakazakii).